Consider the following 332-residue polypeptide: L-lactate dehydrogenase A chain (332 aa).

The residue at position 5 (Lys5) is an N6-acetyllysine; alternate. Lys5 carries the post-translational modification N6-succinyllysine; alternate. Lys14 carries the N6-acetyllysine modification. Residue Thr18 is modified to Phosphothreonine. An NAD(+)-binding site is contributed by 29–57; the sequence is GAVGMACAISILMKDLADELALVDVIEDK. Lys57 bears the N6-acetyllysine; alternate mark. A Glycyl lysine isopeptide (Lys-Gly) (interchain with G-Cter in SUMO2); alternate cross-link involves residue Lys57. Lys81 carries the post-translational modification N6-acetyllysine. Residue Arg99 coordinates NAD(+). A substrate-binding site is contributed by Arg106. Lys118 carries the N6-acetyllysine; alternate modification. Lys118 is subject to N6-succinyllysine; alternate. The residue at position 126 (Lys126) is an N6-acetyllysine. Asn138 is a binding site for NAD(+). 2 residues coordinate substrate: Asn138 and Arg169. His193 (proton acceptor) is an active-site residue. At Lys232 the chain carries N6-acetyllysine. Tyr239 is modified (phosphotyrosine). The residue at position 243 (Lys243) is an N6-acetyllysine. Thr248 is a substrate binding site. A phosphothreonine mark is found at Thr309 and Thr322.

The protein belongs to the LDH/MDH superfamily. LDH family. In terms of assembly, homotetramer. Interacts with PTEN upstream reading frame protein MP31. In terms of processing, ISGylated.

It is found in the cytoplasm. It catalyses the reaction (S)-lactate + NAD(+) = pyruvate + NADH + H(+). Its pathway is fermentation; pyruvate fermentation to lactate; (S)-lactate from pyruvate: step 1/1. Interconverts simultaneously and stereospecifically pyruvate and lactate with concomitant interconversion of NADH and NAD(+). The sequence is that of L-lactate dehydrogenase A chain (LDHA) from Monodelphis domestica (Gray short-tailed opossum).